We begin with the raw amino-acid sequence, 105 residues long: Nucleoid-associated protein SaurJH1_0513 (105 aa).

The segment at 1 to 33 (MRGGGNMQQMMKQMQKMQKKMAQEQKKLKEERI) is disordered. A compositionally biased stretch (low complexity) spans 7–16 (MQQMMKQMQK). The segment covering 21 to 33 (MAQEQKKLKEERI) has biased composition (basic and acidic residues).

The protein belongs to the YbaB/EbfC family. In terms of assembly, homodimer.

The protein resides in the cytoplasm. The protein localises to the nucleoid. Functionally, binds to DNA and alters its conformation. May be involved in regulation of gene expression, nucleoid organization and DNA protection. The protein is Nucleoid-associated protein SaurJH1_0513 of Staphylococcus aureus (strain JH1).